Here is a 595-residue protein sequence, read N- to C-terminus: Aspartate--tRNA(Asp/Asn) ligase (595 aa).

Glutamate 178 provides a ligand contact to L-aspartate. Positions 202-205 (QLFK) are aspartate. Arginine 224 is an L-aspartate binding site. ATP-binding positions include 224-226 (RDE) and glutamine 233. Residue histidine 458 participates in L-aspartate binding. Glutamate 488 lines the ATP pocket. An L-aspartate-binding site is contributed by arginine 495. 540 to 543 (GLDR) lines the ATP pocket.

It belongs to the class-II aminoacyl-tRNA synthetase family. Type 1 subfamily. Homodimer.

The protein resides in the cytoplasm. The catalysed reaction is tRNA(Asx) + L-aspartate + ATP = L-aspartyl-tRNA(Asx) + AMP + diphosphate. In terms of biological role, aspartyl-tRNA synthetase with relaxed tRNA specificity since it is able to aspartylate not only its cognate tRNA(Asp) but also tRNA(Asn). Reaction proceeds in two steps: L-aspartate is first activated by ATP to form Asp-AMP and then transferred to the acceptor end of tRNA(Asp/Asn). The sequence is that of Aspartate--tRNA(Asp/Asn) ligase from Trichodesmium erythraeum (strain IMS101).